A 434-amino-acid polypeptide reads, in one-letter code: Enolase (434 aa).

Gln165 lines the (2R)-2-phosphoglycerate pocket. Glu207 serves as the catalytic Proton donor. Mg(2+) is bound by residues Asp244, Glu291, and Asp318. (2R)-2-phosphoglycerate is bound by residues Lys343, Arg372, Ser373, and Lys394. Catalysis depends on Lys343, which acts as the Proton acceptor.

It belongs to the enolase family. Mg(2+) is required as a cofactor.

Its subcellular location is the cytoplasm. The protein localises to the secreted. It localises to the cell surface. The enzyme catalyses (2R)-2-phosphoglycerate = phosphoenolpyruvate + H2O. The protein operates within carbohydrate degradation; glycolysis; pyruvate from D-glyceraldehyde 3-phosphate: step 4/5. In terms of biological role, catalyzes the reversible conversion of 2-phosphoglycerate (2-PG) into phosphoenolpyruvate (PEP). It is essential for the degradation of carbohydrates via glycolysis. The chain is Enolase from Macrococcus caseolyticus (strain JCSC5402) (Macrococcoides caseolyticum).